Consider the following 313-residue polypeptide: Pyrimidine-specific ribonucleoside hydrolase RihB (313 aa).

The active-site Proton acceptor is the D11. 3 residues coordinate Ca(2+): D11, D16, and V124. Residues Q227 and H239 each coordinate substrate. D240 is a Ca(2+) binding site.

Belongs to the IUNH family. RihB subfamily. As to quaternary structure, homotetramer. Requires Ca(2+) as cofactor.

The catalysed reaction is a pyrimidine ribonucleoside + H2O = a pyrimidine nucleobase + D-ribose. Hydrolyzes cytidine or uridine to ribose and cytosine or uracil, respectively. Has a clear preference for cytidine over uridine. Strictly specific for ribonucleosides. The protein is Pyrimidine-specific ribonucleoside hydrolase RihB of Escherichia coli O17:K52:H18 (strain UMN026 / ExPEC).